We begin with the raw amino-acid sequence, 943 residues long: Translation initiation factor IF-2 (943 aa).

Residues 46 to 359 (IKGMLSKQSA…MPQRKERPLP (314 aa)) form a disordered region. Positions 57–76 (KAPSSQAAKTPAKAAKTSSA) are enriched in low complexity. 2 stretches are compositionally biased toward basic and acidic residues: residues 92-103 (SNDHADVAEHSQ) and 110-124 (AKQENKPARSNKTSD). A compositionally biased stretch (polar residues) spans 130–141 (SKSTILRPRSTQ). The segment covering 142-190 (TAHTNTNHNRGGNTASANNTANGRNSNRSNNNNNNRSANNANRSGNNNR) has biased composition (low complexity). Composition is skewed to basic and acidic residues over residues 191-205 (SNERNRNDRNRRFDN), 239-250 (ASERQQPKRQEA), and 259-271 (KRSEQPRTERPRT). Composition is skewed to low complexity over residues 289–299 (PAAAAPKPASA) and 315–330 (NFGRSNSYGNRNGFNR). Residues 331-342 (NNRRNKKNKRRQ) show a composition bias toward basic residues. Residues 346-358 (PKKEMPQRKERPL) show a composition bias toward basic and acidic residues. One can recognise a tr-type G domain in the interval 444–613 (PRPPVVTIMG…LLEADVLELK (170 aa)). The segment at 453-460 (GHVDHGKT) is G1. 453 to 460 (GHVDHGKT) is a GTP binding site. The interval 478 to 482 (GITQH) is G2. The segment at 499 to 502 (DTPG) is G3. Residues 499 to 503 (DTPGH) and 553 to 556 (NKID) each bind GTP. Residues 553-556 (NKID) form a G4 region. The G5 stretch occupies residues 589 to 591 (SAK).

The protein belongs to the TRAFAC class translation factor GTPase superfamily. Classic translation factor GTPase family. IF-2 subfamily.

It localises to the cytoplasm. Its function is as follows. One of the essential components for the initiation of protein synthesis. Protects formylmethionyl-tRNA from spontaneous hydrolysis and promotes its binding to the 30S ribosomal subunits. Also involved in the hydrolysis of GTP during the formation of the 70S ribosomal complex. This Lacticaseibacillus casei (strain BL23) (Lactobacillus casei) protein is Translation initiation factor IF-2.